Reading from the N-terminus, the 600-residue chain is Arginine--tRNA ligase (600 aa).

L-arginine contacts are provided by residues 151–153 (SPN), histidine 162, tyrosine 332, aspartate 336, and glutamine 360. A 'HIGH' region motif is present at residues 152–162 (PNIAKEMHIGH).

Belongs to the class-I aminoacyl-tRNA synthetase family.

It catalyses the reaction tRNA(Arg) + L-arginine + ATP = L-arginyl-tRNA(Arg) + AMP + diphosphate. The polypeptide is Arginine--tRNA ligase (RARS) (Acanthamoeba polyphaga mimivirus (APMV)).